Reading from the N-terminus, the 7073-residue chain is Replicase polyprotein 1ab (7073 aa).

The Cytoplasmic segment spans residues Met-1–Lys-2202. Residues Thr-12–Gly-127 enclose the CoV Nsp1 globular domain. The 32-residue stretch at Glu-148–Gly-179 folds into the BetaCoV Nsp1 C-terminal domain. Positions Thr-183 to Arg-456 constitute a CoV Nsp2 N-terminal domain. The Zn(2+) site is built by Cys-200, Cys-231, His-234, His-236, Cys-323, Cys-326, Cys-341, Cys-344, Cys-370, Cys-373, His-382, and Cys-416. The interval Cys-200–His-236 is C2H2. The tract at residues Cys-323–Cys-344 is C4. The C2HC stretch occupies residues Cys-370–Cys-416. The 231-residue stretch at Arg-458–Met-688 folds into the CoV Nsp2 middle domain. The region spanning Ile-690–Gly-818 is the CoV Nsp2 C-terminal domain. A Ubiquitin-like 1 domain is found at Lys-822 to Glu-930. Disordered regions lie at residues Arg-972–Val-1003 and Arg-1175–Val-1198. Residues Glu-974–Pro-999 show a composition bias toward acidic residues. Residues Val-1003–Leu-1169 enclose the Macro 1 domain. 2 consecutive Macro domains span residues Lys-1207–Glu-1335 and Ile-1343–Ser-1470. The DPUP domain maps to Thr-1472–Ser-1538. In terms of domain architecture, Ubiquitin-like 2 spans Val-1542–Val-1597. The Peptidase C16 domain occupies Tyr-1611 to Gly-1875. The active-site For PL-PRO activity is the Cys-1651. Cys-1729, Cys-1732, Cys-1764, and Cys-1766 together coordinate Zn(2+). Residues Cys-1729 to Cys-1766 form a C4-type zinc finger. Catalysis depends on for PL-PRO activity residues His-1812 and Asp-1826. A Nucleic acid-binding domain is found at Pro-1888–Thr-1998. A G2M domain is found at Pro-2023–Asn-2132. The helical transmembrane segment at Leu-2203 to Val-2223 threads the bilayer. The interval Leu-2203–Met-2324 is HD1. The 3Ecto domain occupies Thr-2224 to Asp-2294. The Lumenal portion of the chain corresponds to Thr-2224–Glu-2303. 2 cysteine pairs are disulfide-bonded: Cys-2240/Cys-2268 and Cys-2259/Cys-2265. Residues Trp-2304–Met-2324 traverse the membrane as a helical segment. At Gln-2325 to Thr-2754 the chain is on the cytoplasmic side. The interval Lys-2372–Asp-2462 is Y1. Residues Lys-2372 to Gly-2740 enclose the CoV Nsp3 Y domain. 8 residues coordinate Zn(2+): His-2376, Cys-2381, Cys-2386, Cys-2389, Cys-2422, His-2425, Cys-2429, and Cys-2432. Residues His-2376–Cys-2389 form a ZF1 region. The tract at residues Cys-2422–Cys-2432 is ZF2. The tract at residues Gln-2463–Val-2557 is Y2. A coV-Y region spans residues Gln-2463–Gly-2740. Positions Gly-2558–Asp-2639 are Y3. A Y4 region spans residues Leu-2640–Gly-2740. Residues Leu-2755–Ile-2775 traverse the membrane as a helical segment. Residues Leu-2755–Ile-3125 form an HD2 region. At His-2776–Ser-3021 the chain is on the lumenal side. Residues Ala-3022 to Met-3042 form a helical membrane-spanning segment. At Lys-3043 to Ser-3076 the chain is on the cytoplasmic side. The chain crosses the membrane as a helical span at residues Phe-3077 to Val-3097. At Ser-3098 to Gln-3104 the chain is on the lumenal side. A helical transmembrane segment spans residues Trp-3105–Ile-3125. The Cytoplasmic portion of the chain corresponds to Ser-3126–Thr-3563. The Nsp4C domain occupies Val-3142–Gln-3240. Residues Ser-3241–Gln-3546 form the Peptidase C30 domain. Catalysis depends on for 3CL-PRO activity residues His-3281 and Cys-3385. The chain crosses the membrane as a helical span at residues Phe-3564–Tyr-3584. An HD3 region spans residues Phe-3564 to Leu-3776. A topological domain (lumenal) is located at residue Glu-3585. The chain crosses the membrane as a helical span at residues Asn-3586 to Val-3606. At Lys-3607–Ala-3611 the chain is on the cytoplasmic side. A helical membrane pass occupies residues Phe-3612–Met-3632. Residues Pro-3633–Lys-3657 are Lumenal-facing. Residues Asp-3658–Tyr-3678 traverse the membrane as a helical segment. Residues Asp-3679–Thr-3727 lie on the Cytoplasmic side of the membrane. The chain crosses the membrane as a helical span at residues Ile-3728–Ile-3748. Topologically, residues Thr-3749–Cys-3755 are lumenal. The helical transmembrane segment at Ile-3756–Leu-3776 threads the bilayer. Over Leu-3777–Asn-7073 the chain is Cytoplasmic. In terms of domain architecture, RdRp Nsp7 cofactor spans Ser-3837–Gln-3919. The RdRp Nsp8 cofactor domain occupies Ala-3920–Gln-4117. The region spanning Asn-4118–Gln-4230 is the Nsp9 ssRNA-binding domain. The ExoN/MTase coactivator domain occupies Ala-4231 to Gln-4369. The Zn(2+) site is built by Cys-4304, Cys-4307, His-4313, Cys-4320, Cys-4347, Cys-4350, Cys-4358, and Cys-4360. 2 zinc fingers span residues Cys-4304 to Cys-4320 and Cys-4347 to Cys-4360. The 255-residue stretch at Phe-4376–Leu-4630 folds into the NiRAN domain. Residues Asn-4578 and Asp-4587 each contribute to the Mn(2+) site. The Nsp12 Interface domain occupies Ile-4635–Ser-4733. The Zn(2+) site is built by His-4664, Cys-4670, Cys-4675, Cys-4679, and Cys-4856. The 568-residue stretch at Arg-4734–Gln-5301 folds into the Nsp12 RNA-dependent RNA polymerase domain. Residues Ser-4736–Ala-4950 are rdRp Fingers N-ter. The segment at Thr-4951–Pro-4989 is rdRp Palm N-ter. Residues Pro-4981–Gly-5143 form the RdRp catalytic domain. The tract at residues Lys-4990 to Gly-5048 is rdRp Fingers C-ter. 3 residues coordinate Zn(2+): His-5011, Cys-5014, and Cys-5015. The rdRp Palm C-ter stretch occupies residues Thr-5049–Gln-5184. Active-site residues include Ser-5128, Asp-5129, and Asp-5130. Positions His-5185 to Gln-5301 are rdRp Thumb. The 113-residue stretch at Ala-5302–Asp-5414 folds into the CV ZBD domain. Positions 5306, 5309, 5317, 5320, 5327, 5330, 5334, 5340, 5351, 5356, 5373, and 5376 each coordinate Zn(2+). The (+)RNA virus helicase ATP-binding domain occupies Asn-5558 to Leu-5739. Residue Gly-5583–Ser-5590 coordinates ATP. The region spanning Gly-5740–Leu-5909 is the (+)RNA virus helicase C-terminal domain. Residues Met-5974–Val-6189 form the ExoN domain. Catalysis depends on residues Asp-5992, Glu-5994, and Glu-6093. The Mg(2+) site is built by Glu-5994 and Glu-6093. Residues Cys-6109, Cys-6112, Cys-6128, His-6131, His-6159, Cys-6163, and His-6166 each coordinate Zn(2+). Active-site residues include His-6170 and Asp-6175. Positions 6170 and 6175 each coordinate Mg(2+). Residue Cys-6181 coordinates Zn(2+). One can recognise an N7-MTase domain in the interval Tyr-6198–Gln-6429. Residue Asp-6233–Ala-6239 participates in S-adenosyl-L-methionine binding. The gpppA-binding stretch occupies residues Cys-6316–Thr-6330. Zn(2+) is bound by residues Cys-6354, Cys-6375, Cys-6386, and His-6389. One can recognise a Nsp15 N-terminal oligomerization domain in the interval Ser-6430–Arg-6490. Positions Asn-6491 to Gln-6616 constitute an AV-Nsp11N/CoV-Nsp15M domain. The 140-residue stretch at Lys-6633–Pro-6772 folds into the NendoU domain. Catalysis depends on residues His-6663, His-6678, Lys-6718, Lys-6821, Asp-6905, Lys-6945, and Glu-6978. Residues Ser-6777–Val-7071 form the Nidovirus-type SAM-dependent 2'-O-MTase domain.

It belongs to the coronaviruses polyprotein 1ab family. Interacts with host PHB and PHB2. As to quaternary structure, interacts with papain-like protease nsp3 and non-structural protein 6. In terms of assembly, monomer. Homodimer. Only the homodimer shows catalytic activity. Interacts with nsp8 and nsp12 to form the replication-transcription complex (RTC): nsp12, nsp7, two subunits of nsp8, and up to two subunits of nsp13. Eight copies of nsp7 and eight copies of nsp8 assemble to form a heterohexadecamer dsRNA-encircling ring structure. As to quaternary structure, interacts with nsp7, nsp13 and nsp12 to form the replication-transcription complex (RTC): nsp12, nsp7, two subunits of nsp8, and up to two subunits of nsp13. Eight copies of nsp7 and eight copies of nsp8 assemble to form a heterohexadecamer dsRNA-encircling ring structure. Interacts with ORF6 protein. In terms of assembly, homodimer. Interacts with nsp12. Homododecamer. Interacts with proofreading exoribonuclease nsp14 and 2'-O-methyltransferase nsp16; these interactions enhance nsp14 and nsp16 enzymatic activities. As to quaternary structure, interacts with nsp7 and nsp8 to form the replication-transcription complex (RTC): nsp12, nsp7, two subunits of nsp8, and up to two subunits of nsp13. Interacts with nsp9. In terms of assembly, interacts with nsp8 to form the replication-transcription complex (RTC): nsp12, nsp7, two subunits of nsp8, and up to two subunits of nsp13. Interacts (via N-terminus) with host DDX1. Interacts with non-structural protein 10. As to quaternary structure, homohexamer. In terms of assembly, interacts with nsp10. It depends on Zn(2+) as a cofactor. The cofactor is Mn(2+). Mg(2+) serves as cofactor. In terms of processing, specific enzymatic cleavages in vivo by its own proteases yield mature proteins. 3C-like proteinase nsp5 liberates nsps 6-16 from the polyprotein. Papain-like and 3C-like proteinases are autocatalytically processed.

Its subcellular location is the host cytoplasm. The protein resides in the host endosome. It is found in the host membrane. It localises to the host Golgi apparatus. The protein localises to the host perinuclear region. Its subcellular location is the host endoplasmic reticulum. The protein resides in the host endoplasmic reticulum-Golgi intermediate compartment. It carries out the reaction RNA(n) + a ribonucleoside 5'-triphosphate = RNA(n+1) + diphosphate. The catalysed reaction is ATP + H2O = ADP + phosphate + H(+). It catalyses the reaction TSAVLQ-|-SGFRK-NH2 and SGVTFQ-|-GKFKK the two peptides corresponding to the two self-cleavage sites of the SARS 3C-like proteinase are the two most reactive peptide substrates. The enzyme exhibits a strong preference for substrates containing Gln at P1 position and Leu at P2 position.. The enzyme catalyses Thiol-dependent hydrolysis of ester, thioester, amide, peptide and isopeptide bonds formed by the C-terminal Gly of ubiquitin (a 76-residue protein attached to proteins as an intracellular targeting signal).. It carries out the reaction a 5'-end (N(7)-methyl 5'-triphosphoguanosine)-ribonucleoside in mRNA + S-adenosyl-L-methionine = a 5'-end (N(7)-methyl 5'-triphosphoguanosine)-(2'-O-methyl-ribonucleoside) in mRNA + S-adenosyl-L-homocysteine + H(+). The catalysed reaction is uridylyl-uridylyl-ribonucleotide-RNA = a 3'-end uridylyl-2',3'-cyclophospho-uridine-RNA + a 5'-end dephospho-ribonucleoside-RNA. It catalyses the reaction a 5'-end (5'-triphosphoguanosine)-ribonucleoside in mRNA + S-adenosyl-L-methionine = a 5'-end (N(7)-methyl 5'-triphosphoguanosine)-ribonucleoside in mRNA + S-adenosyl-L-homocysteine. The enzyme catalyses a 5'-end diphospho-ribonucleoside in mRNA + GTP + H(+) = a 5'-end (5'-triphosphoguanosine)-ribonucleoside in mRNA + diphosphate. Inhibited by Remdesivir (GS-5734). In terms of biological role, multifunctional protein involved in the transcription and replication of viral RNAs. Contains the proteinases responsible for the cleavages of the polyprotein. Its function is as follows. Inhibits host translation by interacting with the 40S ribosomal subunit. The nsp1-40S ribosome complex further induces an endonucleolytic cleavage near the 5'UTR of host mRNAs, targeting them for degradation. Viral mRNAs are not susceptible to nsp1-mediated endonucleolytic RNA cleavage thanks to the presence of a 5'-end leader sequence and are therefore protected from degradation. By suppressing host gene expression, nsp1 facilitates efficient viral gene expression in infected cells and evasion from host immune response. May disrupt nuclear pore function by binding and displacing host NUP93. May play a role in the modulation of host cell survival signaling pathway by interacting with host PHB and PHB2. Indeed, these two proteins play a role in maintaining the functional integrity of the mitochondria and protecting cells from various stresses. Functionally, responsible for the cleavages located at the N-terminus of the replicase polyprotein. In addition, PL-PRO possesses a deubiquitinating/deISGylating activity and processes both 'Lys-48'- and 'Lys-63'-linked polyubiquitin chains from cellular substrates. Plays a role in host membrane rearrangement that leads to creation of cytoplasmic double-membrane vesicles (DMV) necessary for viral replication. Nsp3, nsp4 and nsp6 together are sufficient to form DMV. Antagonizes innate immune induction of type I interferon by blocking the phosphorylation, dimerization and subsequent nuclear translocation of host IRF3. Also prevents host NF-kappa-B signaling. In terms of biological role, plays a role in host membrane rearrangement that leads to creation of cytoplasmic double-membrane vesicles (DMV) necessary for viral replication. Alone appears incapable to induce membrane curvature, but together with nsp3 is able to induce paired membranes. Nsp3, nsp4 and nsp6 together are sufficient to form DMV. Its function is as follows. Cleaves the C-terminus of replicase polyprotein at 11 sites. Recognizes substrates containing the core sequence [ILMVF]-Q-|-[SGACN]. May cleave human NLRP1 in lung epithelial cells, thereby activating the NLRP1 inflammasome pathway. Also able to bind an ADP-ribose-1''-phosphate (ADRP). May cleave host ATP6V1G1 thereby modifying host vacuoles intracellular pH. Plays a role in host membrane rearrangement that leads to creation of cytoplasmic double-membrane vesicles (DMV) necessary for viral replication. Nsp3, nsp4 and nsp6 together are sufficient to form DMV. Plays a role in the initial induction of autophagosomes from host endoplasmic reticulum. Later, limits the expansion of these phagosomes that are no longer able to deliver viral components to lysosomes. Functionally, forms a hexadecamer with nsp8 (8 subunits of each) that may participate in viral replication by acting as a primase. Alternatively, may synthesize substantially longer products than oligonucleotide primers. In terms of biological role, forms a hexadecamer with nsp7 (8 subunits of each) that may participate in viral replication by acting as a primase. Alternatively, may synthesize substantially longer products than oligonucleotide primers. Its function is as follows. Forms a primer, NSP9-pU, which is utilized by the polymerase for the initiation of RNA chains. Interacts with ribosome signal recognition particle RNA (SRP). Together with NSP8, suppress protein integration into the cell membrane, thereby disrupting host immune defenses. Plays a pivotal role in viral transcription by stimulating both nsp14 3'-5' exoribonuclease and nsp16 2'-O-methyltransferase activities. Therefore plays an essential role in viral mRNAs cap methylation. Functionally, RNA-directed RNA polymerase that catalyzes the transcription of viral genomic and subgenomic RNAs. Acts in complex with nsp7 and nsp8 to transcribe both the minus and positive strands of genomic RNA. The kinase-like NiRAN domain of NSP12 attaches one or more nucleotides to the amino terminus of NSP9, forming a covalent RNA-protein intermediate that serves as transcription/replication primer. Subgenomic RNAs (sgRNAs) are formed by discontinuous transcription: The polymerase has the ability to pause at transcription-regulating sequences (TRS) and jump to the leader TRS, resulting in a major deletion. This creates a series of subgenomic RNAs that are replicated, transcribed and translated. In addition, Nsp12 is a subunit of the viral RNA capping enzyme that catalyzes the RNA guanylyltransferase reaction for genomic and sub-genomic RNAs. Subsequently, the NiRAN domain transfers RNA to GDP, and forms the core cap structure GpppA-RNA. In terms of biological role, multi-functional protein with a zinc-binding domain in N-terminus displaying RNA and DNA duplex-unwinding activities with 5' to 3' polarity. Activity of helicase is dependent on magnesium. Its function is as follows. Plays a role in viral RNA synthesis through two distinct activities. The N7-guanine methyltransferase activity plays a role in the formation of the cap structure GpppA-RNA. The proofreading exoribonuclease reduces the sensitivity of the virus to RNA mutagens during replication. This activity acts on both ssRNA and dsRNA in a 3'-5' direction. Plays a role in viral transcription/replication and prevents the simultaneous activation of host cell dsRNA sensors, such as MDA5/IFIH1, OAS, and PKR. Acts by degrading the 5'-polyuridines generated during replication of the poly(A) region of viral genomic and subgenomic RNAs. Catalyzes a two-step reaction in which a 2'3'-cyclic phosphate (2'3'-cP) is first generated by 2'-O transesterification, which is then hydrolyzed to a 3'-phosphate (3'-P). If not degraded, poly(U) RNA would hybridize with poly(A) RNA tails and activate host dsRNA sensors. Functionally, methyltransferase that mediates mRNA cap 2'-O-ribose methylation to the 5'-cap structure of viral mRNAs. N7-methyl guanosine cap is a prerequisite for binding of nsp16. Therefore plays an essential role in viral mRNAs cap methylation which is essential to evade immune system. The chain is Replicase polyprotein 1ab (rep) from Severe acute respiratory syndrome coronavirus (SARS-CoV).